A 223-amino-acid chain; its full sequence is Phosphoribosylformylglycinamidine synthase subunit PurQ (223 aa).

The region spanning 3–223 is the Glutamine amidotransferase type-1 domain; that stretch reads FAVLVFPGSN…MVKSWREQHV (221 aa). The active-site Nucleophile is the Cys85. Residues His193 and Glu195 contribute to the active site.

As to quaternary structure, part of the FGAM synthase complex composed of 1 PurL, 1 PurQ and 2 PurS subunits.

The protein resides in the cytoplasm. The enzyme catalyses N(2)-formyl-N(1)-(5-phospho-beta-D-ribosyl)glycinamide + L-glutamine + ATP + H2O = 2-formamido-N(1)-(5-O-phospho-beta-D-ribosyl)acetamidine + L-glutamate + ADP + phosphate + H(+). The catalysed reaction is L-glutamine + H2O = L-glutamate + NH4(+). The protein operates within purine metabolism; IMP biosynthesis via de novo pathway; 5-amino-1-(5-phospho-D-ribosyl)imidazole from N(2)-formyl-N(1)-(5-phospho-D-ribosyl)glycinamide: step 1/2. Part of the phosphoribosylformylglycinamidine synthase complex involved in the purines biosynthetic pathway. Catalyzes the ATP-dependent conversion of formylglycinamide ribonucleotide (FGAR) and glutamine to yield formylglycinamidine ribonucleotide (FGAM) and glutamate. The FGAM synthase complex is composed of three subunits. PurQ produces an ammonia molecule by converting glutamine to glutamate. PurL transfers the ammonia molecule to FGAR to form FGAM in an ATP-dependent manner. PurS interacts with PurQ and PurL and is thought to assist in the transfer of the ammonia molecule from PurQ to PurL. This Staphylococcus aureus (strain MRSA252) protein is Phosphoribosylformylglycinamidine synthase subunit PurQ.